Reading from the N-terminus, the 108-residue chain is Dormancy-associated protein homolog 1 (108 aa).

A disordered region spans residues 28-59; that stretch reads DIKGVGEGSSSKTVAAVAGSPGTPTTPGSARK. Ser47 carries the phosphoserine modification. Residue Thr50 is modified to Phosphothreonine.

This sequence belongs to the DRM1/ARP family. Expressed mainly in the low bolt.

This is Dormancy-associated protein homolog 1 from Arabidopsis thaliana (Mouse-ear cress).